Consider the following 447-residue polypeptide: MALNRLVFSLSLWLGFIGAAQAASSEPLPPSKDPWYTAPPGFESAEPGTVLRVRPAPGNLTSITANSSASYNILYRTTDSHFKPTWAVTTLLVPELGPDSLAQQKFQQSALLSFQVPYDSADVDASPSYSMYSASNDSSAPYTAALGSGLFVSVPDYEGPLAAFTAGIISGYATLDSIRAVLSLGLGLNITNSPRAALWGYSGGAFATEWASELAVQYAPDLVAGPVVGAAMGAPLANITTFMHSVNGQATSGLVPNTLLGLTSQYPDVRKYLVSKLNDDSEYNRTGFLAAEGFTVTESGVAFAGIDINKYFQNGTDILNDPKILALVNREGIMGYHGVPKWPLFIYQAIPDEVTPISATDALVEKYCAVGADILYERNTVGSHYEETNNSYKAAVQWLEDVFSSQHDINRAQGCVIQDVTRNTTSGDLVRRKDVQKSVFDLWSAAW.

The N-terminal stretch at 1-22 is a signal peptide; the sequence is MALNRLVFSLSLWLGFIGAAQA. N-linked (GlcNAc...) asparagine glycosylation is found at Asn59, Asn66, Asn136, and Asn189. The active-site Charge relay system is the Ser202. N-linked (GlcNAc...) asparagine glycosylation is found at Asn238, Asn284, and Asn314. Active-site charge relay system residues include Asp352 and His384. 2 N-linked (GlcNAc...) asparagine glycosylation sites follow: Asn389 and Asn423.

The protein belongs to the AB hydrolase superfamily. Lipase family.

It participates in sesquiterpene biosynthesis; trichothecene biosynthesis. Functionally, trichothecene C-3 esterase; part of the core gene cluster that mediates the biosynthesis of trichothecenes, a very large family of chemically related bicyclic sesquiterpene compounds acting as mycotoxins, including T2-toxin. The biosynthesis of trichothecenes begins with the cyclization of farnesyl diphosphate to trichodiene and is catalyzed by the trichodiene synthase TRI5. Trichodiene undergoes a series of oxygenations catalyzed by the cytochrome P450 monooxygenase TRI4. TRI4 controls the addition of four oxygens at C-2, C-3, C-11, and the C-12, C-13-epoxide to form the intermediate isotrichotriol. Isotrichotriol then undergoes a non-enzymatic isomerization and cyclization to form isotrichodermol. During this process, the oxygen at the C-2 position becomes the pyran ring oxygen and the hydroxyl group at C-11 is lost. More complex type A trichothecenes are built by modifying isotrichodermol through a series of paired hydroxylation and acetylation or acylation steps. Isotrichodermol is converted to isotrichodermin by the acetyltransferase TRI101. TRI101 encodes a C-3 transacetylase that acts as a self-protection or resistance factor during biosynthesis and that the presence of a free C-3 hydroxyl group is a key component of Fusarium trichothecene phytotoxicity. A second hydroxyl group is added to C-15 by the trichothecene C-15 hydroxylase TRI11, producing 15-decalonectrin, which is then acetylated by TRI3, producing calonectrin. A third hydroxyl group is added at C-4 by the cytochrome P450 monooxygenase TRI13, converting calonectrin to 3,15-diacetoxyspirpenol, which is subsequently acetylated by the acetyltransferase TRI7. A fourth hydroxyl group is added to C-8 by the cytochrome P450 monooxygenase TRI1, followed by the addition of an isovaleryl moiety by TRI16. Finally, the acetyl group is removed from the C-3 position by the trichothecene C-3 esterase TRI8 to produce T-2 toxin. The chain is Trichothecene C-3 esterase from Fusarium sporotrichioides.